The chain runs to 569 residues: 3-oxosteroid 1-dehydrogenase (569 aa).

Position 10-39 (10-39 (DVVVVGSGAAGMVAALTAAHQGLSTVVVEK)) interacts with FAD. Residues 127-148 (PGGKPTGRSVEPKPFDANKLGP) are disordered.

The protein belongs to the FAD-dependent oxidoreductase 2 family. 3-oxosteroid dehydrogenase subfamily. FAD serves as cofactor.

It carries out the reaction a 3-oxosteroid + A = a 3-oxo-Delta(1)-steroid + AH2. The enzyme catalyses a 3-oxo-Delta(4)-steroid + A = a 3-oxo-Delta(1,4)-steroid + AH2. Catalyzes the elimination of the C-1 and C-2 hydrogen atoms of the A-ring from the polycyclic ring structure of 3-ketosteroids. Is also involved in the formation of 1,4-androstadiene-3,17-dione (ADD) from 4-androstene-3,17-dione (AD) to. This chain is 3-oxosteroid 1-dehydrogenase (ksdD), found in Mycolicibacterium smegmatis (strain ATCC 700084 / mc(2)155) (Mycobacterium smegmatis).